The following is a 194-amino-acid chain: Ribose 1,5-bisphosphate phosphokinase PhnN (194 aa).

Residue glycine 24–aspartate 31 coordinates ATP.

It belongs to the ribose 1,5-bisphosphokinase family.

The enzyme catalyses alpha-D-ribose 1,5-bisphosphate + ATP = 5-phospho-alpha-D-ribose 1-diphosphate + ADP. Its pathway is metabolic intermediate biosynthesis; 5-phospho-alpha-D-ribose 1-diphosphate biosynthesis; 5-phospho-alpha-D-ribose 1-diphosphate from D-ribose 5-phosphate (route II): step 3/3. Catalyzes the phosphorylation of ribose 1,5-bisphosphate to 5-phospho-D-ribosyl alpha-1-diphosphate (PRPP). The protein is Ribose 1,5-bisphosphate phosphokinase PhnN of Rhodopseudomonas palustris (strain ATCC BAA-98 / CGA009).